A 169-amino-acid polypeptide reads, in one-letter code: NAD(P)H-quinone oxidoreductase subunit J, chloroplastic (169 aa).

This sequence belongs to the complex I 30 kDa subunit family. NDH is composed of at least 16 different subunits, 5 of which are encoded in the nucleus.

The protein resides in the plastid. It is found in the chloroplast thylakoid membrane. The catalysed reaction is a plastoquinone + NADH + (n+1) H(+)(in) = a plastoquinol + NAD(+) + n H(+)(out). The enzyme catalyses a plastoquinone + NADPH + (n+1) H(+)(in) = a plastoquinol + NADP(+) + n H(+)(out). In terms of biological role, NDH shuttles electrons from NAD(P)H:plastoquinone, via FMN and iron-sulfur (Fe-S) centers, to quinones in the photosynthetic chain and possibly in a chloroplast respiratory chain. The immediate electron acceptor for the enzyme in this species is believed to be plastoquinone. Couples the redox reaction to proton translocation, and thus conserves the redox energy in a proton gradient. The sequence is that of NAD(P)H-quinone oxidoreductase subunit J, chloroplastic from Anthoceros angustus (Hornwort).